We begin with the raw amino-acid sequence, 439 residues long: RNA polymerase II-associated protein RBA50 (439 aa).

Disordered stretches follow at residues 1–35 (MDLL…GFPE) and 49–79 (LREK…SEAK). The span at 15–30 (SVESNDNGTLSTNNCG) shows a compositional bias: polar residues.

Belongs to the RPAP1 family.

The protein resides in the cytoplasm. Its function is as follows. Forms an interface between the RNA polymerase II enzyme and chaperone/scaffolding proteins, suggesting that it is required to connect RNA polymerase II to regulators of protein complex formation. The chain is RNA polymerase II-associated protein RBA50 (RBA50) from Saccharomyces cerevisiae (strain ATCC 204508 / S288c) (Baker's yeast).